A 224-amino-acid chain; its full sequence is MTQDQLKQAVAQAAVDFILPKLDEKSVVGVGTGSTANFFIDALAQHKTAFDGAVASSEATAQRLKGHGIPVYELNSVSELEFYVDGADESDAHLNLIKGGGAALTREKIVAAVAKTFICIADGSKLVPVLGAFPLPVEVIPMARSHVARQLVKLGGDPVYREGVVTDNGNVILDVHNLQITNPVELEAQINAIVGVVTNGLFAARPADLLLLGTSEGVKSLKAE.

Substrate is bound by residues 32 to 35 (TGST), 85 to 88 (DGAD), and 98 to 101 (KGGG). Glu107 acts as the Proton acceptor in catalysis. Lys125 serves as a coordination point for substrate.

Belongs to the ribose 5-phosphate isomerase family. As to quaternary structure, homodimer.

It catalyses the reaction aldehydo-D-ribose 5-phosphate = D-ribulose 5-phosphate. The protein operates within carbohydrate degradation; pentose phosphate pathway; D-ribose 5-phosphate from D-ribulose 5-phosphate (non-oxidative stage): step 1/1. Its function is as follows. Catalyzes the reversible conversion of ribose-5-phosphate to ribulose 5-phosphate. The protein is Ribose-5-phosphate isomerase A of Pseudomonas putida (strain GB-1).